A 478-amino-acid chain; its full sequence is DNA gyrase subunit B (478 aa).

Residues 319–438 (CEIYLVEGDS…GGHVYIAQPP (120 aa)) form the Toprim domain. Mg(2+) is bound by residues E325, D403, and D405.

This sequence belongs to the type II topoisomerase GyrB family. Heterotetramer, composed of two GyrA and two GyrB chains. In the heterotetramer, GyrA contains the active site tyrosine that forms a transient covalent intermediate with DNA, while GyrB binds cofactors and catalyzes ATP hydrolysis. Requires Mg(2+) as cofactor. Mn(2+) is required as a cofactor. It depends on Ca(2+) as a cofactor.

It localises to the cytoplasm. It catalyses the reaction ATP-dependent breakage, passage and rejoining of double-stranded DNA.. In terms of biological role, a type II topoisomerase that negatively supercoils closed circular double-stranded (ds) DNA in an ATP-dependent manner to modulate DNA topology and maintain chromosomes in an underwound state. Negative supercoiling favors strand separation, and DNA replication, transcription, recombination and repair, all of which involve strand separation. Also able to catalyze the interconversion of other topological isomers of dsDNA rings, including catenanes and knotted rings. Type II topoisomerases break and join 2 DNA strands simultaneously in an ATP-dependent manner. This Cytophaga aurantiaca protein is DNA gyrase subunit B (gyrB).